The primary structure comprises 95 residues: Aspartyl/glutamyl-tRNA(Asn/Gln) amidotransferase subunit C (95 aa).

It belongs to the GatC family. As to quaternary structure, heterotrimer of A, B and C subunits.

The catalysed reaction is L-glutamyl-tRNA(Gln) + L-glutamine + ATP + H2O = L-glutaminyl-tRNA(Gln) + L-glutamate + ADP + phosphate + H(+). It carries out the reaction L-aspartyl-tRNA(Asn) + L-glutamine + ATP + H2O = L-asparaginyl-tRNA(Asn) + L-glutamate + ADP + phosphate + 2 H(+). In terms of biological role, allows the formation of correctly charged Asn-tRNA(Asn) or Gln-tRNA(Gln) through the transamidation of misacylated Asp-tRNA(Asn) or Glu-tRNA(Gln) in organisms which lack either or both of asparaginyl-tRNA or glutaminyl-tRNA synthetases. The reaction takes place in the presence of glutamine and ATP through an activated phospho-Asp-tRNA(Asn) or phospho-Glu-tRNA(Gln). In Rhizobium johnstonii (strain DSM 114642 / LMG 32736 / 3841) (Rhizobium leguminosarum bv. viciae), this protein is Aspartyl/glutamyl-tRNA(Asn/Gln) amidotransferase subunit C.